The sequence spans 683 residues: Long-chain fatty acid transport protein 3 (683 aa).

The chain crosses the membrane as a helical span at residues Ala3–Trp23. Gly residues predominate over residues Gly119–Gly128. The tract at residues Gly119–Gly145 is disordered. The segment covering Ala133–Gly145 has biased composition (low complexity). ATP is bound by residues Thr288 to Thr292, His331, Thr428, Asp528, Arg543, and Lys635.

The protein belongs to the ATP-dependent AMP-binding enzyme family. In terms of tissue distribution, expressed in bronchial and bronchiolar epithelial cells (at protein level).

The protein localises to the mitochondrion membrane. It catalyses the reaction a fatty acid(in) = a fatty acid(out). The enzyme catalyses a long-chain fatty acid + ATP + CoA = a long-chain fatty acyl-CoA + AMP + diphosphate. It carries out the reaction hexadecanoate + ATP + CoA = hexadecanoyl-CoA + AMP + diphosphate. The catalysed reaction is (9Z)-octadecenoate + ATP + CoA = (9Z)-octadecenoyl-CoA + AMP + diphosphate. It catalyses the reaction (9Z,12Z)-octadecadienoate + ATP + CoA = (9Z,12Z)-octadecadienoyl-CoA + AMP + diphosphate. The enzyme catalyses (5Z,8Z,11Z,14Z)-eicosatetraenoate + ATP + CoA = (5Z,8Z,11Z,14Z)-eicosatetraenoyl-CoA + AMP + diphosphate. It carries out the reaction a very long-chain fatty acid + ATP + CoA = a very long-chain fatty acyl-CoA + AMP + diphosphate. The catalysed reaction is tetracosanoate + ATP + CoA = tetracosanoyl-CoA + AMP + diphosphate. In terms of biological role, mainly functions as an acyl-CoA ligase catalyzing the ATP-dependent formation of fatty acyl-CoA using LCFA and very-long-chain fatty acids (VLCFA) as substrates. Can mediate the levels of long-chain fatty acids (LCFA) in the cell by facilitating their transport across membranes. In Homo sapiens (Human), this protein is Long-chain fatty acid transport protein 3.